The following is a 132-amino-acid chain: MVTDTISDMLTRIRNANMIKHQIVQIPATKMSKAITNILKEEGFIEDYEIYMENSYQFLLISLKYKGKSREPVICKMVRVSKPGLRVYSKSKKLPKVLDNLGIAIISTSKGVMTNLKAKELGIGGEVLCYIW.

It belongs to the universal ribosomal protein uS8 family. In terms of assembly, part of the 30S ribosomal subunit.

It is found in the plastid. The protein localises to the chloroplast. In terms of biological role, one of the primary rRNA binding proteins, it binds directly to 16S rRNA central domain where it helps coordinate assembly of the platform of the 30S subunit. The protein is Small ribosomal subunit protein uS8c (rps8) of Trieres chinensis (Marine centric diatom).